Consider the following 311-residue polypeptide: Putative dihydroorotate dehydrogenase A (fumarate) (311 aa).

Substrate-binding positions include Lys-45, 69-73, and Asn-128; that span reads NSMGL. 45 to 46 is an FMN binding site; it reads KT. An FMN-binding site is contributed by Asn-128. Residue Cys-131 is the Nucleophile of the active site. The FMN site is built by Lys-165 and Val-193. 194–195 is a substrate binding site; the sequence is NS. Residues Gly-220, 248–249, and 270–271 each bind FMN; these read GG and GT.

The protein belongs to the dihydroorotate dehydrogenase family. Type 1 subfamily. In terms of assembly, homodimer. The cofactor is FMN.

The protein localises to the cytoplasm. The catalysed reaction is (S)-dihydroorotate + fumarate = orotate + succinate. It participates in pyrimidine metabolism; UMP biosynthesis via de novo pathway. Its function is as follows. Catalyzes the conversion of dihydroorotate to orotate with fumarate as the electron acceptor. This chain is Putative dihydroorotate dehydrogenase A (fumarate) (pyrD), found in Streptococcus equi subsp. equi (strain 4047).